Here is a 395-residue protein sequence, read N- to C-terminus: Protein hedgehog (395 aa).

An N-terminal signal peptide occupies residues 1 to 26; it reads MDNHSSVPWASAASVTCLSLDAKCHS. Residues 26-43 show a composition bias toward low complexity; it reads SSSSSCSSKSTASSISAS. The disordered stretch occupies residues 26–46; the sequence is SSSSSCSSKSTASSISASPET. Positions 27-82 are excised as a propeptide; it reads SSSSCSSKSTASSISASPETQTMRHIAHTQRCLSRLTSLVALLLIVLPMMFSPAHS. Cys83 carries the N-palmitoyl cysteine lipid modification. Glu147, Glu148, Asp153, Thr183, Glu184, Asp187, and Asp189 together coordinate Ca(2+). Gly255 is lipidated: Cholesterol glycine ester.

This sequence belongs to the hedgehog family. As to quaternary structure, interacts with shf. Post-translationally, the C-terminal part of the hedgehog protein precursor displays an autoproteolysis activity that results in the cleavage of the full-length protein into two parts (N-product and C-product). In addition, the C-terminal part displays a cholesterol transferase activity that results by the covalent attachment of a cholesterol moiety to the C-terminal of the newly generated N-product. The N-product is the active species in both local and long-range signaling, whereas the C-product has no signaling activity. In terms of processing, cholesterylation is required for N-product targeting to lipid rafts and multimerization. N-palmitoylation by Rasp of the hedgehog N-product, within the secretory pathway, is required for the embryonic and larval patterning activities of the hedgehog signal.

The protein resides in the nucleus. It localises to the cytoplasm. Its subcellular location is the cell membrane. It catalyses the reaction glycyl-L-cysteinyl-[protein] + cholesterol + H(+) = [protein]-C-terminal glycyl cholesterol ester + N-terminal L-cysteinyl-[protein]. Its function is as follows. The C-terminal part of the hedgehog protein precursor displays an autoproteolysis activity that results in the cleavage of the full-length protein into two parts (N-product and C-product). In addition, the C-terminal part displays a cholesterol transferase activity that results by the covalent attachment of a cholesterol moiety to the C-terminal of the newly generated N-product. Once cleaved, the C-product has no signaling activity and diffuses from the cell. The dually lipidated hedgehog protein N-product is a morphogen which is essential for a variety of patterning events during development. Establishes the anterior-posterior axis of the embryonic segments and patterns the larval imaginal disks. Binds to the patched (ptc) receptor, which functions in association with smoothened (smo), to activate the transcription of target genes wingless (wg), decapentaplegic (dpp) and ptc. In the absence of hh, ptc represses the constitutive signaling activity of smo through fused (fu). Essential component of a signaling pathway which regulates the Duox-dependent gut immune response to bacterial uracil; required to activate Cad99C-dependent endosome formation, norpA-dependent Ca2+ mobilization and p38 MAPK, which are essential steps in the Duox-dependent production of reactive oxygen species (ROS) in response to intestinal bacterial infection. During photoreceptor differentiation, it up-regulates transcription of Ubr3, which in turn promotes the hh-signaling pathway by mediating the ubiquitination and degradation of cos. The protein is Protein hedgehog of Drosophila simulans (Fruit fly).